A 94-amino-acid chain; its full sequence is Pyrimidine/purine nucleoside phosphorylase (94 aa).

It belongs to the nucleoside phosphorylase PpnP family.

The catalysed reaction is a purine D-ribonucleoside + phosphate = a purine nucleobase + alpha-D-ribose 1-phosphate. It carries out the reaction adenosine + phosphate = alpha-D-ribose 1-phosphate + adenine. The enzyme catalyses cytidine + phosphate = cytosine + alpha-D-ribose 1-phosphate. It catalyses the reaction guanosine + phosphate = alpha-D-ribose 1-phosphate + guanine. The catalysed reaction is inosine + phosphate = alpha-D-ribose 1-phosphate + hypoxanthine. It carries out the reaction thymidine + phosphate = 2-deoxy-alpha-D-ribose 1-phosphate + thymine. The enzyme catalyses uridine + phosphate = alpha-D-ribose 1-phosphate + uracil. It catalyses the reaction xanthosine + phosphate = alpha-D-ribose 1-phosphate + xanthine. In terms of biological role, catalyzes the phosphorolysis of diverse nucleosides, yielding D-ribose 1-phosphate and the respective free bases. Can use uridine, adenosine, guanosine, cytidine, thymidine, inosine and xanthosine as substrates. Also catalyzes the reverse reactions. This chain is Pyrimidine/purine nucleoside phosphorylase, found in Salmonella newport (strain SL254).